We begin with the raw amino-acid sequence, 250 residues long: Transmembrane protein 106C (250 aa).

The interval 1–25 (MGSQHSAAARPSSCRRKQEDDRDGL) is disordered. Glycine 2 carries the N-myristoyl glycine lipid modification. Residues 16-25 (RKQEDDRDGL) show a composition bias toward basic and acidic residues. Residues 87 to 107 (YVLLSILLCLLASGLVVFFLF) form a helical membrane-spanning segment. N-linked (GlcNAc...) asparagine glycosylation is found at asparagine 173 and asparagine 186. The helical transmembrane segment at 197-217 (FSYVYFFCTVPEILVHNIVIF) threads the bilayer.

It belongs to the TMEM106 family. In terms of assembly, interacts with TMEM106B.

The protein localises to the endoplasmic reticulum membrane. The protein resides in the membrane. The sequence is that of Transmembrane protein 106C (TMEM106C) from Homo sapiens (Human).